We begin with the raw amino-acid sequence, 130 residues long: Putative pre-16S rRNA nuclease (130 aa).

The protein belongs to the YqgF nuclease family.

The protein localises to the cytoplasm. Functionally, could be a nuclease involved in processing of the 5'-end of pre-16S rRNA. In Sulfurimonas denitrificans (strain ATCC 33889 / DSM 1251) (Thiomicrospira denitrificans (strain ATCC 33889 / DSM 1251)), this protein is Putative pre-16S rRNA nuclease.